We begin with the raw amino-acid sequence, 327 residues long: MLKKIGILTSGGDSQGMNAAIAGVIKTAHAKGLETYIIRDGYLGLINNWIEVVDNNFADSIMLLGGTVIGSARLPEFKDPEVQKKAVDILKKQEIAALVVIGGDGSYQGAQRLTELGINCIALPGTIDNDITSSDYTIGFDTAINIVVEAIDRLRDTMQSHNRCSIVEVMGHACGDIALYAGIAGGADIISINEAALSETEIADRVAMLHQAQKRSVIVVVSEMIYPDVHKLAKLVESKSGYITRATVLGHTQRGGNPTAMDRYRAFQMAQFAVEQIIAGVGGLAIGNQGDQIIARPIMEALSIPRSSRKEIWAKFDQLNQNIYQKS.

ATP-binding positions include G12, 73 to 74 (RL), and 103 to 106 (GDGS). A Mg(2+)-binding site is contributed by D104. 126–128 (TID) lines the substrate pocket. The Proton acceptor role is filled by D128. An ADP-binding site is contributed by R155. Substrate-binding positions include R163 and 170–172 (MGH). ADP-binding positions include 186 to 188 (GAD) and 214 to 216 (KRS). Substrate is bound by residues E223, R245, and 251 to 254 (HTQR).

This sequence belongs to the phosphofructokinase type A (PFKA) family. ATP-dependent PFK group I subfamily. Prokaryotic clade 'B1' sub-subfamily. In terms of assembly, homotetramer. It depends on Mg(2+) as a cofactor.

It localises to the cytoplasm. The enzyme catalyses beta-D-fructose 6-phosphate + ATP = beta-D-fructose 1,6-bisphosphate + ADP + H(+). It participates in carbohydrate degradation; glycolysis; D-glyceraldehyde 3-phosphate and glycerone phosphate from D-glucose: step 3/4. With respect to regulation, allosterically activated by ADP and other diphosphonucleosides, and allosterically inhibited by phosphoenolpyruvate. Its function is as follows. Catalyzes the phosphorylation of D-fructose 6-phosphate to fructose 1,6-bisphosphate by ATP, the first committing step of glycolysis. The chain is ATP-dependent 6-phosphofructokinase from Spiroplasma citri.